Reading from the N-terminus, the 235-residue chain is MILLVSPIDVEEAKEAIAGGADIIDVKNPKEGSLGANFPWMIKAIREVTPKDLLVSATVGDVPYKPGTISLAAVGAAISGADYIKVGLYGVKNYYQAVELMKNVVRAVKDIDENKIVVAAGYADAYRVGAVEPLIVPKIARDAGCDVAMLDTAIKDGKTLFDFQSKEILAEFVDEAHSYGLKCALAGSIKKEHIPILKEIGTDIVGVRGAACKGGDRNNGRIDRELVKELKELCK.

The Schiff-base intermediate with substrate role is filled by lysine 27. Lysine 85 serves as the catalytic Proton acceptor.

It belongs to the MfnB family. In terms of assembly, homohexamer. Trimer of dimers.

It catalyses the reaction 2 D-glyceraldehyde 3-phosphate = 4-(hydroxymethyl)-2-furancarboxaldehyde phosphate + phosphate + 2 H2O. The protein operates within cofactor biosynthesis; methanofuran biosynthesis. Catalyzes the formation of 4-(hydroxymethyl)-2-furancarboxaldehyde phosphate (4-HFC-P) from two molecules of glyceraldehyde-3-P (GA-3-P). The chain is (5-formylfuran-3-yl)methyl phosphate synthase from Methanocaldococcus jannaschii (strain ATCC 43067 / DSM 2661 / JAL-1 / JCM 10045 / NBRC 100440) (Methanococcus jannaschii).